The sequence spans 552 residues: uncharacterized protein (552 aa).

Residues 8–200 (KLFADMIIQG…LLCVYEGFLK (193 aa)) enclose the DhaL domain.

This is an uncharacterized protein from Staphylococcus epidermidis (strain ATCC 35984 / DSM 28319 / BCRC 17069 / CCUG 31568 / BM 3577 / RP62A).